A 593-amino-acid chain; its full sequence is MVSRLKIHSGLRLWEFPDQYVIEPTDGSSASCLDISRLDGSMKLIDQVAECNSLRVPKIRSIFGVVGMLKLLAGSYLVVVTESESVGSFLGHPIYKINSLKFLPCDHSLENPHEEQKKMETDDYSRLLSVAERTTGLYFSYEINLTLTAQRLHDLGDESKLLPLWRQAEPRFLWNNYMLEVLIDNKLDQFLLPVIQGSFHSFQTAIGRDIVDITLIARRCSRRNGTRMWRRGADPDGYVANFVETEQIVRMNGYTSSFVQIRGSMPFMWEQIVDLTYKPKFEIVQPEEAARIAERHFLDLRKKYGSVLAVDLVNKHGGEGRLSERFAGAMQHITGDDVRYLHFDFHHICGHIHFERLAILYEQMEDFLEKNGYFLLNEKGEKMKEQLGIVRTNCIDCLDRTNVTQSMIGRKLLELQLKRIGVFGAEETIRSHQNFDECYKILWANHGDDISIQYSGTPALKGDFVRYGQRTIQGVLQDGWNALARYYLNNFADGTKQDAIDLVQGHYIVAVSRDMAPVPRKRGLEAVANFPVALTVILISFWFATMSVKQVGSGYKHLLFSLVWAGISVAVAALVRANGRIFCNRPSLHKPRS.

Residues Leu128 to Gly456 form the SAC domain. The Phosphatase catalytic core signature appears at Arg391–Asn402. 2 helical membrane-spanning segments follow: residues Ala526–Met546 and Tyr555–Val575.

In terms of tissue distribution, predominantly expressed in flowers.

It localises to the endoplasmic reticulum membrane. Functionally, phosphoinositide phosphatase that hydrolyzes PtdIns(3)P and PtdIns(4)P. Involved in priming for different defense responses. The chain is Phosphoinositide phosphatase SAC6 (SAC6) from Arabidopsis thaliana (Mouse-ear cress).